The sequence spans 370 residues: Protein-tyrosine sulfotransferase 1 (370 aa).

At 1 to 8 (MVGKLKQN) the chain is on the cytoplasmic side. Residues 9 to 25 (LLLACLVISSVTVFYLG) form a helical; Signal-anchor for type II membrane protein membrane-spanning segment. At 26–370 (QHAMECHHRI…KEKPQTEQVE (345 aa)) the chain is on the lumenal side. The N-linked (GlcNAc...) asparagine glycan is linked to N60. 79-83 (RSGTT) contributes to the 3'-phosphoadenylyl sulfate binding site. Cysteines 97 and 157 form a disulfide. Residue E100 is the Proton donor/acceptor of the active site. Residues 102-106 (RVIPR) form an interaction with peptide substrate region. Residues R184, S192, and R196 each contribute to the 3'-phosphoadenylyl sulfate site. C226 and C234 are joined by a disulfide. Y239 is a binding site for 3'-phosphoadenylyl sulfate. An N-linked (GlcNAc...) asparagine glycan is attached at N262. 3'-phosphoadenylyl sulfate contacts are provided by residues 286 to 295 (STDQVIKPVN) and K301.

The protein belongs to the protein sulfotransferase family. In terms of assembly, homodimer. Can also form heterodimers with TPST2. N-glycosylated. In terms of tissue distribution, ubiquitous. Detected in heart, brain, placenta, lung, liver, skeletal muscle, kidney and pancreas.

The protein localises to the golgi apparatus membrane. The enzyme catalyses L-tyrosyl-[protein] + 3'-phosphoadenylyl sulfate = O-sulfo-L-tyrosine-[protein] + adenosine 3',5'-bisphosphate + H(+). Catalyzes the O-sulfation of tyrosine residues within acidic motifs of polypeptides, using 3'-phosphoadenylyl sulfate (PAPS) as cosubstrate. This chain is Protein-tyrosine sulfotransferase 1 (TPST1), found in Homo sapiens (Human).